The following is a 180-amino-acid chain: Putative 5'(3')-deoxyribonucleotidase (180 aa).

Catalysis depends on aspartate 9, which acts as the Nucleophile. Mg(2+) is bound by residues aspartate 9, aspartate 11, and aspartate 135. The Proton donor role is filled by aspartate 11.

Belongs to the 5'(3')-deoxyribonucleotidase family. Mg(2+) serves as cofactor.

Dephosphorylates the 5' and 2'(3')-phosphates of deoxyribonucleotides. The chain is Putative 5'(3')-deoxyribonucleotidase from Staphylococcus aureus (strain MSSA476).